Consider the following 550-residue polypeptide: MSIDLNWETVTGGPDGQELADSIRDFIHTKFQSVPLPRFIKSVTVHDFQFGTIPPEIELKDITDPLPDFYEENLDSDLASESGSEEDEEEIADDRRRRQTEAVLTGGAGAHNPSALPPHLSLGGLGGLGGLGAGGSRNGGDIGSPFLRVNTPGIPGGTSNLHYFHSQFATGLSGTQTPLAAVAGAHHLNSAAWLEGHGHSSSAPNLHQYGAPDFGGVDGQSTAPVPNQDLRRPLLQQPPSTHRRNPSQSSIDLNPSLGLTPPSPTVLSVPPFPPSSTGGPSPPPGLAKPHHPHHPHHHHAHHAHPLLREKHSVSTLAASAGPPSRPPTRDKTTPSHHPDPEDVHAPNTTTTNKQRSTSPATSSPLATSAQEQAEEEEEEEKRKLREKKVDDMQAVFRIRYAGDIKLLLTADILLDYPMPSFVGIPVRLSITGLTFDGVGVLAKIRKRVHFCFLSPEDAVAAVGQGENEVDGGEGDKQTGFKSPPGGGNGLGATKLGGLLQEIRVESEIGQRESGKQSLKNVGKVERFVLEQVRRIFEEEFVYPSYWTFLV.

The SMP-LTD domain occupies 1–550 (MSIDLNWETV…VYPSYWTFLV (550 aa)). Disordered stretches follow at residues 76–97 (SDLA…DRRR), 196–386 (GHGH…KLRE), and 466–489 (ENEV…GGNG). Positions 83-92 (GSEEDEEEIA) are enriched in acidic residues. Residues 270–286 (PPFPPSSTGGPSPPPGL) are compositionally biased toward pro residues. Basic residues predominate over residues 288–305 (KPHHPHHPHHHHAHHAHP). Basic and acidic residues predominate over residues 327-344 (PTRDKTTPSHHPDPEDVH). The segment covering 346-355 (PNTTTTNKQR) has biased composition (polar residues). Over residues 356-371 (STSPATSSPLATSAQE) the composition is skewed to low complexity.

It belongs to the MDM12 family. Component of the ER-mitochondria encounter structure (ERMES) or MDM complex, composed of MMM1, MDM10, MDM12 and MDM34. An MMM1 homodimer associates with one molecule of MDM12 on each side in a pairwise head-to-tail manner, and the SMP-LTD domains of MMM1 and MDM12 generate a continuous hydrophobic tunnel for phospholipid trafficking.

It is found in the mitochondrion outer membrane. It localises to the endoplasmic reticulum membrane. Its function is as follows. Component of the ERMES/MDM complex, which serves as a molecular tether to connect the endoplasmic reticulum (ER) and mitochondria. Components of this complex are involved in the control of mitochondrial shape and protein biogenesis, and function in nonvesicular lipid trafficking between the ER and mitochondria. MDM12 is required for the interaction of the ER-resident membrane protein MMM1 and the outer mitochondrial membrane-resident beta-barrel protein MDM10. The MDM12-MMM1 subcomplex functions in the major beta-barrel assembly pathway that is responsible for biogenesis of all mitochondrial outer membrane beta-barrel proteins, and acts in a late step after the SAM complex. The MDM10-MDM12-MMM1 subcomplex further acts in the TOM40-specific pathway after the action of the MDM12-MMM1 complex. Essential for establishing and maintaining the structure of mitochondria and maintenance of mtDNA nucleoids. In Podospora anserina (strain S / ATCC MYA-4624 / DSM 980 / FGSC 10383) (Pleurage anserina), this protein is Mitochondrial distribution and morphology protein 12.